Here is a 300-residue protein sequence, read N- to C-terminus: MAKTYQCDPLIDAFLDDLWSSKGLSDNTLSAYRTDLRHFDRYLQSQGLRLRDVGQADVRAYLAYRVEQQFARTSSARLLSSLRRFYNYLLQTKQISGDPMAQIESPKLSRHLPDSLSESQVDRLLAEPNVDDPVECRDKAMLELLYATGLRVSELVGLTMEQMSLRQGLVRIIGKGGKERLVPMGEMAITEVEHYLTSARHELLGHIQSDVVFPSKRSQMMTRQTFWHRIKLYASRAGIETELSPHTLRHAFATHLLNHGADLRVVQLLLGHSDLSTTQIYTHVARARLQELHQQHHPRG.

Positions 5 to 90 (YQCDPLIDAF…SLRRFYNYLL (86 aa)) constitute a Core-binding (CB) domain. In terms of domain architecture, Tyr recombinase spans 111–294 (HLPDSLSESQ…ARARLQELHQ (184 aa)). Catalysis depends on residues arginine 151, lysine 175, histidine 246, arginine 249, and histidine 272. The O-(3'-phospho-DNA)-tyrosine intermediate role is filled by tyrosine 281.

It belongs to the 'phage' integrase family. XerD subfamily. Forms a cyclic heterotetrameric complex composed of two molecules of XerC and two molecules of XerD.

Its subcellular location is the cytoplasm. Its function is as follows. Site-specific tyrosine recombinase, which acts by catalyzing the cutting and rejoining of the recombining DNA molecules. The XerC-XerD complex is essential to convert dimers of the bacterial chromosome into monomers to permit their segregation at cell division. It also contributes to the segregational stability of plasmids. The protein is Tyrosine recombinase XerD of Shewanella oneidensis (strain ATCC 700550 / JCM 31522 / CIP 106686 / LMG 19005 / NCIMB 14063 / MR-1).